Here is a 145-residue protein sequence, read N- to C-terminus: D-aminoacyl-tRNA deacylase (145 aa).

Residues 137-138 (GP) carry the Gly-cisPro motif, important for rejection of L-amino acids motif.

Belongs to the DTD family. In terms of assembly, homodimer.

It localises to the cytoplasm. It carries out the reaction glycyl-tRNA(Ala) + H2O = tRNA(Ala) + glycine + H(+). It catalyses the reaction a D-aminoacyl-tRNA + H2O = a tRNA + a D-alpha-amino acid + H(+). Its function is as follows. An aminoacyl-tRNA editing enzyme that deacylates mischarged D-aminoacyl-tRNAs. Also deacylates mischarged glycyl-tRNA(Ala), protecting cells against glycine mischarging by AlaRS. Acts via tRNA-based rather than protein-based catalysis; rejects L-amino acids rather than detecting D-amino acids in the active site. By recycling D-aminoacyl-tRNA to D-amino acids and free tRNA molecules, this enzyme counteracts the toxicity associated with the formation of D-aminoacyl-tRNA entities in vivo and helps enforce protein L-homochirality. The chain is D-aminoacyl-tRNA deacylase from Methylacidiphilum infernorum (isolate V4) (Methylokorus infernorum (strain V4)).